The primary structure comprises 628 residues: MPHPDGDLDRRIELLTAQIIAARKAYYQENTSLMSDVEYDALEHELKDAEHAKGFSDRNSPSLTVGIAAQLNLFEPVKHIEPMLSLDNVFSLDQLHSWYEKTKKICPEGDQCTFVCELKIDGVGVSLRYANGYLISAATRGDGAIGEDITQNMLYVPSIPPRIALPGIFEIRGEAFIKRDEFDRINQLSLERSKQFANPRNFVSGCIRTKTPNMRYLESISFYAHGFTQVYGYTSGGMNLHSDITASGGVKTEIEHGMFSAYSRLSECKIPVNSYNRLCTNFSEIESYIENIRLNRQCVPYAIDGIVVKIDSLQKQALLGSTTKAPRWAVAYKFPSESTVTRLLDIEVSVGRTGRVTPYAVLQPIQLDGSEVSRATLHNQKVIGDKDLLIGDYVRIRKAGDIVPEVLCALPEKRDGSEVLFKMPSLCPSCGAELMPSKLGDIDLRCPNMQSCLVQLAGRLEYIGSRGVLDIAYLAEENAYALSHLRKFGKSAEVQLFKITIDDLVALEFMYKGNMRSPFRKKGDSFPGFEEPTKSAQDMVDSIERAKRSPLWKFLLALNIRHIGPASAKALADHFGSIESIINAKIDELLKVRSLGETIAISVHDWFRDPWRVELVNTWRSDGALFGH.

Residues 36-40 (DVEYD), 85-86 (SL), and E117 each bind NAD(+). K119 functions as the N6-AMP-lysine intermediate in the catalytic mechanism. NAD(+) is bound by residues R140, E174, K309, and K333. Zn(2+)-binding residues include C427, C430, C446, and C452.

The protein belongs to the NAD-dependent DNA ligase family. LigA subfamily. Requires Mg(2+) as cofactor. Mn(2+) serves as cofactor.

It catalyses the reaction NAD(+) + (deoxyribonucleotide)n-3'-hydroxyl + 5'-phospho-(deoxyribonucleotide)m = (deoxyribonucleotide)n+m + AMP + beta-nicotinamide D-nucleotide.. DNA ligase that catalyzes the formation of phosphodiester linkages between 5'-phosphoryl and 3'-hydroxyl groups in double-stranded DNA using NAD as a coenzyme and as the energy source for the reaction. It is essential for DNA replication and repair of damaged DNA. The polypeptide is DNA ligase (Tropheryma whipplei (strain Twist) (Whipple's bacillus)).